A 239-amino-acid chain; its full sequence is MTLKEFIIPAIDIKGGKVVRLYKGEFDKVKVYNENPIDMAKYFEDAGAEHIHVVDLDGALEGLPKNIKILESIVRSVNIPIEFGGGLRSFEAVKAVLDLGVERVVIGSLAYQNPEEFYKIVESFPNKVIVGIDAKDGKVAIKGWTEKTEVSPLEFAKKYDDLDIFGFLFTDVSRDGSMIGANVEATVELAKNLKHPVIASGGVGSLEDVIKLYEKREFGIFGVVVGKAIYEGKIDLKEI.

The active-site Proton acceptor is D12. The active-site Proton donor is D133.

The protein belongs to the HisA/HisF family.

It is found in the cytoplasm. The enzyme catalyses 1-(5-phospho-beta-D-ribosyl)-5-[(5-phospho-beta-D-ribosylamino)methylideneamino]imidazole-4-carboxamide = 5-[(5-phospho-1-deoxy-D-ribulos-1-ylimino)methylamino]-1-(5-phospho-beta-D-ribosyl)imidazole-4-carboxamide. It participates in amino-acid biosynthesis; L-histidine biosynthesis; L-histidine from 5-phospho-alpha-D-ribose 1-diphosphate: step 4/9. This is 1-(5-phosphoribosyl)-5-[(5-phosphoribosylamino)methylideneamino] imidazole-4-carboxamide isomerase from Sulfurihydrogenibium sp. (strain YO3AOP1).